The primary structure comprises 194 residues: MAIIIGIDPGSRMTGYGIIHQKGDTLRYLDAGTIRTDTKEMPERLKRIFQGLTRITQYHLKYSDEPIHAAVEQVFMAENPDSALKLGQARGAAIAALVALDLEVSEYTARQIKQSVCGYGAADKVQVQEMVCRILKLDVTPQQDAADGLACAICHAHSSHSMNKLLMNSTLRGRGTSKKKGRWRLTEEDLASLK.

Residues Asp-8, Glu-72, and Asp-144 contribute to the active site. Asp-8, Glu-72, and Asp-144 together coordinate Mg(2+).

It belongs to the RuvC family. Homodimer which binds Holliday junction (HJ) DNA. The HJ becomes 2-fold symmetrical on binding to RuvC with unstacked arms; it has a different conformation from HJ DNA in complex with RuvA. In the full resolvosome a probable DNA-RuvA(4)-RuvB(12)-RuvC(2) complex forms which resolves the HJ. Requires Mg(2+) as cofactor.

Its subcellular location is the cytoplasm. It carries out the reaction Endonucleolytic cleavage at a junction such as a reciprocal single-stranded crossover between two homologous DNA duplexes (Holliday junction).. Functionally, the RuvA-RuvB-RuvC complex processes Holliday junction (HJ) DNA during genetic recombination and DNA repair. Endonuclease that resolves HJ intermediates. Cleaves cruciform DNA by making single-stranded nicks across the HJ at symmetrical positions within the homologous arms, yielding a 5'-phosphate and a 3'-hydroxyl group; requires a central core of homology in the junction. The consensus cleavage sequence is 5'-(A/T)TT(C/G)-3'. Cleavage occurs on the 3'-side of the TT dinucleotide at the point of strand exchange. HJ branch migration catalyzed by RuvA-RuvB allows RuvC to scan DNA until it finds its consensus sequence, where it cleaves and resolves the cruciform DNA. The sequence is that of Crossover junction endodeoxyribonuclease RuvC from Psychrobacter sp. (strain PRwf-1).